Consider the following 172-residue polypeptide: 3-hydroxydecanoyl-[acyl-carrier-protein] dehydratase (172 aa).

Residue His71 is part of the active site.

It belongs to the thioester dehydratase family. FabA subfamily. In terms of assembly, homodimer.

It is found in the cytoplasm. The enzyme catalyses a (3R)-hydroxyacyl-[ACP] = a (2E)-enoyl-[ACP] + H2O. The catalysed reaction is (3R)-hydroxydecanoyl-[ACP] = (2E)-decenoyl-[ACP] + H2O. It catalyses the reaction (2E)-decenoyl-[ACP] = (3Z)-decenoyl-[ACP]. The protein operates within lipid metabolism; fatty acid biosynthesis. Its function is as follows. Necessary for the introduction of cis unsaturation into fatty acids. Catalyzes the dehydration of (3R)-3-hydroxydecanoyl-ACP to E-(2)-decenoyl-ACP and then its isomerization to Z-(3)-decenoyl-ACP. Can catalyze the dehydratase reaction for beta-hydroxyacyl-ACPs with saturated chain lengths up to 16:0, being most active on intermediate chain length. The chain is 3-hydroxydecanoyl-[acyl-carrier-protein] dehydratase from Salmonella arizonae (strain ATCC BAA-731 / CDC346-86 / RSK2980).